Consider the following 547-residue polypeptide: Inositol-tetrakisphosphate 1-kinase 6 (547 aa).

Position 263 (lysine 263) interacts with 1D-myo-inositol 1,3,4-trisphosphate. Arginine 317 and lysine 370 together coordinate ATP. Residues 327–539 (LEGLSAEGRP…FWDAIKQSYE (213 aa)) enclose the ATP-grasp domain. 1D-myo-inositol 1,3,4-trisphosphate contacts are provided by histidine 381 and lysine 415. ATP is bound by residues 404 to 415 (QEYIDHGSKIFK), serine 430, and serine 450. Mg(2+)-binding residues include aspartate 497, aspartate 511, and asparagine 513. Residues asparagine 513 and serine 517 each coordinate 1D-myo-inositol 1,3,4-trisphosphate.

This sequence belongs to the ITPK1 family. Monomer. Mg(2+) is required as a cofactor.

The catalysed reaction is 1D-myo-inositol 3,4,5,6-tetrakisphosphate + ATP = 1D-myo-inositol 1,3,4,5,6-pentakisphosphate + ADP + H(+). It carries out the reaction 1D-myo-inositol 1,3,4-trisphosphate + ATP = 1D-myo-inositol 1,3,4,5-tetrakisphosphate + ADP + H(+). It catalyses the reaction 1D-myo-inositol 1,3,4-trisphosphate + ATP = 1D-myo-inositol 1,3,4,6-tetrakisphosphate + ADP + H(+). Kinase that can phosphorylate various inositol polyphosphate such as Ins(3,4,5,6)P4 or Ins(1,3,4)P3 and participates in phytic acid biosynthesis in developing seeds. Phytic acid is the primary storage form of phosphorus in cereal grains and other plant seeds. This chain is Inositol-tetrakisphosphate 1-kinase 6, found in Oryza sativa subsp. indica (Rice).